Reading from the N-terminus, the 398-residue chain is S-adenosylmethionine synthase (398 aa).

Residue His16 participates in ATP binding. Mg(2+) is bound at residue Asp18. Position 51 (Glu51) interacts with K(+). The L-methionine site is built by Glu64 and Gln108. The flexible loop stretch occupies residues 108 to 118 (QSADIAQGVDA). ATP contacts are provided by residues 176-178 (DSK), 242-243 (KF), Asp251, 257-258 (RK), Ala274, and Lys278. Asp251 is an L-methionine binding site. Position 282 (Lys282) interacts with L-methionine.

Belongs to the AdoMet synthase family. In terms of assembly, homotetramer; dimer of dimers. Requires Mg(2+) as cofactor. K(+) serves as cofactor.

It localises to the cytoplasm. It carries out the reaction L-methionine + ATP + H2O = S-adenosyl-L-methionine + phosphate + diphosphate. Its pathway is amino-acid biosynthesis; S-adenosyl-L-methionine biosynthesis; S-adenosyl-L-methionine from L-methionine: step 1/1. Its function is as follows. Catalyzes the formation of S-adenosylmethionine (AdoMet) from methionine and ATP. The overall synthetic reaction is composed of two sequential steps, AdoMet formation and the subsequent tripolyphosphate hydrolysis which occurs prior to release of AdoMet from the enzyme. The sequence is that of S-adenosylmethionine synthase from Rhodopseudomonas palustris (strain BisB5).